Reading from the N-terminus, the 303-residue chain is tRNA dimethylallyltransferase (303 aa).

12–19 (GPTGVGKT) contacts ATP. 14 to 19 (TGVGKT) serves as a coordination point for substrate. The tract at residues 37-40 (DSAQ) is interaction with substrate tRNA.

This sequence belongs to the IPP transferase family. As to quaternary structure, monomer. It depends on Mg(2+) as a cofactor.

The enzyme catalyses adenosine(37) in tRNA + dimethylallyl diphosphate = N(6)-dimethylallyladenosine(37) in tRNA + diphosphate. Its function is as follows. Catalyzes the transfer of a dimethylallyl group onto the adenine at position 37 in tRNAs that read codons beginning with uridine, leading to the formation of N6-(dimethylallyl)adenosine (i(6)A). The chain is tRNA dimethylallyltransferase from Fusobacterium nucleatum subsp. nucleatum (strain ATCC 25586 / DSM 15643 / BCRC 10681 / CIP 101130 / JCM 8532 / KCTC 2640 / LMG 13131 / VPI 4355).